The following is a 155-amino-acid chain: Ribosomal RNA large subunit methyltransferase H (155 aa).

S-adenosyl-L-methionine contacts are provided by residues glycine 104 and 123–128 (LSRLTL).

It belongs to the RNA methyltransferase RlmH family. Homodimer.

It localises to the cytoplasm. The catalysed reaction is pseudouridine(1915) in 23S rRNA + S-adenosyl-L-methionine = N(3)-methylpseudouridine(1915) in 23S rRNA + S-adenosyl-L-homocysteine + H(+). Specifically methylates the pseudouridine at position 1915 (m3Psi1915) in 23S rRNA. This is Ribosomal RNA large subunit methyltransferase H from Marinomonas sp. (strain MWYL1).